The sequence spans 159 residues: 2-C-methyl-D-erythritol 2,4-cyclodiphosphate synthase (159 aa).

Residues Asp-10 and His-12 each contribute to the a divalent metal cation site. Residues 10 to 12 (DVH) and 36 to 37 (HS) each bind 4-CDP-2-C-methyl-D-erythritol 2-phosphate. Position 44 (His-44) interacts with a divalent metal cation. Residues 58-60 (DIG), 134-137 (TTTE), Phe-141, and Arg-144 contribute to the 4-CDP-2-C-methyl-D-erythritol 2-phosphate site.

Belongs to the IspF family. In terms of assembly, homotrimer. A divalent metal cation is required as a cofactor.

The enzyme catalyses 4-CDP-2-C-methyl-D-erythritol 2-phosphate = 2-C-methyl-D-erythritol 2,4-cyclic diphosphate + CMP. It participates in isoprenoid biosynthesis; isopentenyl diphosphate biosynthesis via DXP pathway; isopentenyl diphosphate from 1-deoxy-D-xylulose 5-phosphate: step 4/6. Functionally, involved in the biosynthesis of isopentenyl diphosphate (IPP) and dimethylallyl diphosphate (DMAPP), two major building blocks of isoprenoid compounds. Catalyzes the conversion of 4-diphosphocytidyl-2-C-methyl-D-erythritol 2-phosphate (CDP-ME2P) to 2-C-methyl-D-erythritol 2,4-cyclodiphosphate (ME-CPP) with a corresponding release of cytidine 5-monophosphate (CMP). This is 2-C-methyl-D-erythritol 2,4-cyclodiphosphate synthase from Bacteroides fragilis (strain YCH46).